The following is a 110-amino-acid chain: MFGGKGGMGNLMKQAQMMQDKMAKVQEEIARTEMTGEAGAGLVKVTMTGNHNVRKVEIDPSLMEDDKEMLEDLIAAACNDAARRIEENQKTKMAEVTGGMQLPPGMKMPF.

The protein belongs to the YbaB/EbfC family. As to quaternary structure, homodimer.

The protein resides in the cytoplasm. It is found in the nucleoid. Its function is as follows. Binds to DNA and alters its conformation. May be involved in regulation of gene expression, nucleoid organization and DNA protection. In Shewanella frigidimarina (strain NCIMB 400), this protein is Nucleoid-associated protein Sfri_2406.